A 206-amino-acid polypeptide reads, in one-letter code: Testis-expressed protein 38 (206 aa).

A helical membrane pass occupies residues 15–35; that stretch reads VSLYFGILGLCSVITGGCIIF.

It is found in the membrane. The protein is Testis-expressed protein 38 (TEX38) of Homo sapiens (Human).